The following is a 267-amino-acid chain: tRNA pseudouridine synthase A (267 aa).

Residue D51 is the Nucleophile of the active site. Residue Y109 coordinates substrate.

Belongs to the tRNA pseudouridine synthase TruA family.

It carries out the reaction uridine(38/39/40) in tRNA = pseudouridine(38/39/40) in tRNA. In terms of biological role, formation of pseudouridine at positions 38, 39 and 40 in the anticodon stem and loop of transfer RNAs. In Methanothrix thermoacetophila (strain DSM 6194 / JCM 14653 / NBRC 101360 / PT) (Methanosaeta thermophila), this protein is tRNA pseudouridine synthase A.